The sequence spans 272 residues: tRNA pseudouridine synthase A (272 aa).

The active-site Nucleophile is D52. Y110 is a binding site for substrate.

This sequence belongs to the tRNA pseudouridine synthase TruA family. As to quaternary structure, homodimer.

It carries out the reaction uridine(38/39/40) in tRNA = pseudouridine(38/39/40) in tRNA. Formation of pseudouridine at positions 38, 39 and 40 in the anticodon stem and loop of transfer RNAs. The polypeptide is tRNA pseudouridine synthase A (Cupriavidus taiwanensis (strain DSM 17343 / BCRC 17206 / CCUG 44338 / CIP 107171 / LMG 19424 / R1) (Ralstonia taiwanensis (strain LMG 19424))).